The chain runs to 243 residues: R-spondin-2 (243 aa).

Positions 1-23 (MRFCLFSFALIILNCMDYSQCQG) are cleaved as a signal peptide. 11 disulfides stabilise this stretch: cysteine 40–cysteine 46, cysteine 43–cysteine 52, cysteine 55–cysteine 74, cysteine 78–cysteine 93, cysteine 96–cysteine 104, cysteine 101–cysteine 110, cysteine 113–cysteine 124, cysteine 128–cysteine 141, cysteine 145–cysteine 187, cysteine 156–cysteine 163, and cysteine 196–cysteine 203. An FU repeat occupies 90 to 134 (MNRCARCRIENCDSCFSKDFCTKCKVGFYLHRGRCFDECPDGFAP). Residues 144 to 204 (GCEVGHWSEW…RCKMAMRHCP (61 aa)) enclose the TSP type-1 domain. An N-linked (GlcNAc...) asparagine glycan is attached at asparagine 160. Basic residues predominate over residues 204–224 (PGGKRTPKAKEKRNKKKRRKL). Positions 204–243 (PGGKRTPKAKEKRNKKKRRKLIERAQEQHSVFLATDRVNQ) are disordered.

The protein belongs to the R-spondin family. Interacts with WNT1. Binds heparin. Interacts with LGR4, LGR5 and LGR6.

The protein localises to the secreted. Its function is as follows. Activator of the canonical Wnt signaling pathway by acting as a ligand for LGR4-6 receptors. Upon binding to LGR4-6 (LGR4, LGR5 or LGR6), LGR4-6 associate with phosphorylated LRP6 and frizzled receptors that are activated by extracellular Wnt receptors, triggering the canonical Wnt signaling pathway to increase expression of target genes. Also regulates the canonical Wnt/beta-catenin-dependent pathway and non-canonical Wnt signaling by acting as an inhibitor of ZNRF3, an important regulator of the Wnt signaling pathway. Probably also acts as a ligand for frizzled and LRP receptors. During embryonic development, plays a crucial role in limb specification, amplifying the Wnt signaling pathway independently of LGR4-6 receptors, possibly by acting as a direct antagonistic ligand to RNF43 and ZNRF3, hence governing the number of limbs an embryo should form. This Mus musculus (Mouse) protein is R-spondin-2 (Rspo2).